The primary structure comprises 149 residues: Protein GR6 (149 aa).

As to expression, expressed in fetus (aged from 7 to 8 weeks). Weakly expressed in lymphocytes.

This is Protein GR6 from Homo sapiens (Human).